A 778-amino-acid polypeptide reads, in one-letter code: Lon protease (778 aa).

The Lon N-terminal domain occupies 6–207; the sequence is LPLMALRDMV…TVISTLTSNI (202 aa). An ATP-binding site is contributed by 356–363; sequence GPPGVGKT. Positions 592-773 constitute a Lon proteolytic domain; that stretch reads EDQIGSTTGL…DQVLKHALVE (182 aa). Catalysis depends on residues S679 and K722.

It belongs to the peptidase S16 family. In terms of assembly, homohexamer. Organized in a ring with a central cavity.

It localises to the cytoplasm. The enzyme catalyses Hydrolysis of proteins in presence of ATP.. Functionally, ATP-dependent serine protease that mediates the selective degradation of mutant and abnormal proteins as well as certain short-lived regulatory proteins. Required for cellular homeostasis and for survival from DNA damage and developmental changes induced by stress. Degrades polypeptides processively to yield small peptide fragments that are 5 to 10 amino acids long. Binds to DNA in a double-stranded, site-specific manner. The sequence is that of Lon protease from Rickettsia felis (strain ATCC VR-1525 / URRWXCal2) (Rickettsia azadi).